Consider the following 282-residue polypeptide: Pseudokinase OPG198 (282 aa).

Positions 1 and 30 each coordinate ATP. The Protein kinase domain occupies 1–282 (MESFKYCFDN…DRLRRLFIQD (282 aa)).

It belongs to the protein kinase superfamily. Ser/Thr protein kinase family. Poxviruses subfamily. As to quaternary structure, interacts with B1/VPK1. Interacts with host VRK1. Interacts with host VRK2.

The protein localises to the host nucleus. With respect to regulation, both catalytically active kinases B1/VPK1 and host VRK2 repress B12 inhibitory activity in a B1/VPK1 deletion mutant strain. Pseudokinase that plays a role in viral DNA replication repression by activating the antiviral protein BANF1 and inhibiting the activity of host VRK1, a cellular modulator of BANF1. The polypeptide is Pseudokinase OPG198 (OPG198) (Cynomys gunnisoni (Gunnison's prairie dog)).